The chain runs to 170 residues: F1 capsule antigen (170 aa).

An N-terminal signal peptide occupies residues 1–21; the sequence is MKKISSVIAIALFGTIATANA. The tract at residues 100–150 is contains potential antigenic determinants that may stimulate T-cells; the sequence is GNNHQFTTKVIGKDSRDFDISPKVNGENLVGDDVVLATGSQDFFVRSIGSK.

The protein resides in the secreted. Its subcellular location is the capsule. The polypeptide is F1 capsule antigen (caf1) (Yersinia pestis).